A 195-amino-acid polypeptide reads, in one-letter code: Glycerol-3-phosphate acyltransferase (195 aa).

5 helical membrane-spanning segments follow: residues 2-22 (LWIF…GLFI), 52-72 (YGVA…LMAY), 78-98 (WIFI…SIFM), 112-132 (VFLA…LAVI), and 145-165 (FAVA…VPLA).

It belongs to the PlsY family. As to quaternary structure, probably interacts with PlsX.

The protein localises to the cell inner membrane. The enzyme catalyses an acyl phosphate + sn-glycerol 3-phosphate = a 1-acyl-sn-glycero-3-phosphate + phosphate. The protein operates within lipid metabolism; phospholipid metabolism. In terms of biological role, catalyzes the transfer of an acyl group from acyl-phosphate (acyl-PO(4)) to glycerol-3-phosphate (G3P) to form lysophosphatidic acid (LPA). This enzyme utilizes acyl-phosphate as fatty acyl donor, but not acyl-CoA or acyl-ACP. This is Glycerol-3-phosphate acyltransferase from Maridesulfovibrio salexigens (strain ATCC 14822 / DSM 2638 / NCIMB 8403 / VKM B-1763) (Desulfovibrio salexigens).